A 175-amino-acid polypeptide reads, in one-letter code: Adenylyl-sulfate kinase (175 aa).

12 to 19 (GLSGAGKT) is a binding site for ATP. S86 serves as the catalytic Phosphoserine intermediate.

The protein belongs to the APS kinase family.

The enzyme catalyses adenosine 5'-phosphosulfate + ATP = 3'-phosphoadenylyl sulfate + ADP + H(+). Its pathway is sulfur metabolism; hydrogen sulfide biosynthesis; sulfite from sulfate: step 2/3. Catalyzes the synthesis of activated sulfate. In Synechococcus sp. (strain JA-2-3B'a(2-13)) (Cyanobacteria bacterium Yellowstone B-Prime), this protein is Adenylyl-sulfate kinase.